A 720-amino-acid polypeptide reads, in one-letter code: TAL effector protein Rip19 (720 aa).

Disordered stretches follow at residues 13-85 and 175-205; these read SVSL…PSLV and QAFASPPRAPRSARARRARTGGDAWPAPTFL. Pro residues predominate over residues 67-85; it reads PRRPLPVAPASAPPAPSLV. The Nuclear localization signal 1 motif lies at 185–191; it reads RSARARR. The stretch at 286–320 is one Cryptic repeat -1 repeat; sequence LTRAHIVDIARQRSGDLALQALLPVATALTAAPLR. The Cryptic repeat 0 repeat unit spans residues 321-354; sequence LSASQIATVAQYGERPAIQALYRLRRKLTRAPLH. A Core repeat 1 repeat occupies 355-389; that stretch reads LTPQQVVAIASHDGGKPALEAVWAKLPVLRGVPYA. One copy of the Cryptic repeat +1 repeat lies at 390–423; sequence LSTAQVVAIACISGQQALEAIEAHMPTLRQAPHS. One copy of the Cryptic repeat +2 repeat lies at 424 to 457; it reads LSPERVAAIACIGGRSAVEAVRQGLPVKAIRRIR. Short sequence motifs (nuclear localization signal) lie at residues 455 to 458, 583 to 586, and 620 to 623; these read RIRR, HRKR, and RRKR. Positions 571-611 are disordered; it reads SPGMAGQSACSPHRKRPAETAIAPRSIRRRPNNAGQPSEPW.

The protein belongs to the transcription activator-like effector (TALE) family. RipTAL/RTL subfamily.

The protein localises to the secreted. It localises to the host nucleus. Its function is as follows. Does not activate plant gene transcription, because it has too few core repeats. This chain is TAL effector protein Rip19, found in Ralstonia solanacearum (Pseudomonas solanacearum).